Reading from the N-terminus, the 120-residue chain is Small ribosomal subunit protein uS19 (120 aa).

This sequence belongs to the universal ribosomal protein uS19 family.

This chain is Small ribosomal subunit protein uS19 (RPS15), found in Naegleria gruberi (Amoeba).